The primary structure comprises 245 residues: 1-(5-phosphoribosyl)-5-[(5-phosphoribosylamino)methylideneamino] imidazole-4-carboxamide isomerase (245 aa).

Residue aspartate 7 is the Proton acceptor of the active site. The active-site Proton donor is the aspartate 129.

The protein belongs to the HisA/HisF family.

It localises to the cytoplasm. The enzyme catalyses 1-(5-phospho-beta-D-ribosyl)-5-[(5-phospho-beta-D-ribosylamino)methylideneamino]imidazole-4-carboxamide = 5-[(5-phospho-1-deoxy-D-ribulos-1-ylimino)methylamino]-1-(5-phospho-beta-D-ribosyl)imidazole-4-carboxamide. The protein operates within amino-acid biosynthesis; L-histidine biosynthesis; L-histidine from 5-phospho-alpha-D-ribose 1-diphosphate: step 4/9. In Yersinia pestis bv. Antiqua (strain Antiqua), this protein is 1-(5-phosphoribosyl)-5-[(5-phosphoribosylamino)methylideneamino] imidazole-4-carboxamide isomerase.